A 148-amino-acid polypeptide reads, in one-letter code: Large ribosomal subunit protein bL9 (148 aa).

This sequence belongs to the bacterial ribosomal protein bL9 family.

Its function is as follows. Binds to the 23S rRNA. The sequence is that of Large ribosomal subunit protein bL9 from Campylobacter concisus (strain 13826).